We begin with the raw amino-acid sequence, 233 residues long: Histone H1-I (233 aa).

2 disordered regions span residues 1-55 (MSDS…HPPV) and 115-233 (TGAS…KKSK). A compositionally biased stretch (low complexity) spans 17–29 (KAATPAKSPAKSP). One can recognise an H15 domain in the interval 51 to 125 (THPPVSEMVV…GASGSFKMPP (75 aa)). Composition is skewed to basic and acidic residues over residues 128–137 (KKVDKPEAAP) and 144–155 (PKREIEKKEKKV). Composition is skewed to basic residues over residues 172-186 (AAKK…KKAA), 199-213 (SPKK…KPTP), and 223-233 (AAAKKPAKKSK).

This sequence belongs to the histone H1/H5 family.

The protein resides in the nucleus. The protein localises to the chromosome. Histones H1 are necessary for the condensation of nucleosome chains into higher-order structures. The polypeptide is Histone H1-I (Glyptotendipes salinus (Midge)).